The chain runs to 369 residues: Flagellar P-ring protein (369 aa).

Positions 1–22 (MIKLKQLIAATLLLSTAFGVHA) are cleaved as a signal peptide.

It belongs to the FlgI family. The basal body constitutes a major portion of the flagellar organelle and consists of four rings (L,P,S, and M) mounted on a central rod.

Its subcellular location is the periplasm. The protein resides in the bacterial flagellum basal body. Functionally, assembles around the rod to form the L-ring and probably protects the motor/basal body from shearing forces during rotation. The protein is Flagellar P-ring protein of Pseudomonas savastanoi pv. phaseolicola (strain 1448A / Race 6) (Pseudomonas syringae pv. phaseolicola (strain 1448A / Race 6)).